We begin with the raw amino-acid sequence, 131 residues long: D-ribose pyranase (131 aa).

H20 functions as the Proton donor in the catalytic mechanism. Substrate-binding positions include D28, H98, and 120–122 (YAN).

Belongs to the RbsD / FucU family. RbsD subfamily. Homodecamer.

It localises to the cytoplasm. The catalysed reaction is beta-D-ribopyranose = beta-D-ribofuranose. Its pathway is carbohydrate metabolism; D-ribose degradation; D-ribose 5-phosphate from beta-D-ribopyranose: step 1/2. In terms of biological role, catalyzes the interconversion of beta-pyran and beta-furan forms of D-ribose. In Bacillus cereus (strain ATCC 14579 / DSM 31 / CCUG 7414 / JCM 2152 / NBRC 15305 / NCIMB 9373 / NCTC 2599 / NRRL B-3711), this protein is D-ribose pyranase.